Here is a 344-residue protein sequence, read N- to C-terminus: AA9 family lytic polysaccharide monooxygenase D (344 aa).

Positions 1-23 are cleaved as a signal peptide; it reads MKTATSYAAFLLSALAALPHASA. His24 is a Cu(2+) binding site. Cys70 and Cys193 are oxidised to a cystine. His179 provides a ligand contact to O2. Residue Tyr190 participates in Cu(2+) binding. Residues Asn201 and Asn207 are each glycosylated (N-linked (GlcNAc...) asparagine). A disordered region spans residues 240-321; the sequence is PPLSNLVSGD…PTTSGNLSAN (82 aa). Residues 259–292 show a composition bias toward low complexity; it reads STSSATLSGGAAPTGTASGSTPAGTSQPSSTTGT. A compositionally biased stretch (polar residues) spans 311-320; sequence APTTSGNLSA. Residue Asn317 is glycosylated (N-linked (GlcNAc...) asparagine).

The protein belongs to the polysaccharide monooxygenase AA9 family. Cu(2+) serves as cofactor.

It is found in the secreted. It carries out the reaction [(1-&gt;4)-beta-D-glucosyl]n+m + reduced acceptor + O2 = 4-dehydro-beta-D-glucosyl-[(1-&gt;4)-beta-D-glucosyl]n-1 + [(1-&gt;4)-beta-D-glucosyl]m + acceptor + H2O.. In terms of biological role, lytic polysaccharide monooxygenase (LPMO) that depolymerizes crystalline and amorphous polysaccharides via the oxidation of scissile alpha- or beta-(1-4)-glycosidic bonds, yielding C1 or C4 oxidation products. Catalysis by LPMOs requires the reduction of the active-site copper from Cu(II) to Cu(I) by a reducing agent and H(2)O(2) or O(2) as a cosubstrate. The polypeptide is AA9 family lytic polysaccharide monooxygenase D (Gloeophyllum trabeum (strain ATCC 11539 / FP-39264 / Madison 617) (Brown rot fungus)).